We begin with the raw amino-acid sequence, 191 residues long: Small ribosomal subunit protein uS5 (191 aa).

Positions 1–21 (MAAERERGGRERSREREERDS) are disordered. Residues 23–86 (FVDKLVHINR…ESAKRNLTRV (64 aa)) enclose the S5 DRBM domain.

In terms of assembly, part of the 30S ribosomal subunit. Contacts proteins S4 and S8.

In terms of biological role, with S4 and S12 plays an important role in translational accuracy. Located at the back of the 30S subunit body where it stabilizes the conformation of the head with respect to the body. This is Small ribosomal subunit protein uS5 from Rhodopseudomonas palustris (strain ATCC BAA-98 / CGA009).